The following is a 493-amino-acid chain: Tripartite motif-containing protein 5 (493 aa).

The residue at position 2 (Ala-2) is an N-acetylalanine. Residues 15-59 (CPICLELLTQPLSLDCGHSFCQACLTANHEKSMLDKGESSCPVCR) form an RING-type zinc finger. The residue at position 86 (Ser-86) is a Phosphoserine. The B box-type zinc finger occupies 90-132 (QKVDHCARHGEKLLLFCQEDGKVICWLCERSQEHRGHHTFLTE). 4 residues coordinate Zn(2+): Cys-95, His-98, Cys-117, and His-123. Residues 131–240 (TEEVAQECQV…LISDLEHRLQ (110 aa)) are a coiled coil. A required for interaction with GABARAP and for autophagy region spans residues 185 to 198 (FEQLRDILDWEESN). The 213-residue stretch at 281–493 (LKGMLEVFRE…VPMTLCSPSS (213 aa)) folds into the B30.2/SPRY domain.

Belongs to the TRIM/RBCC family. Can form homodimers and homotrimers. In addition to lower-order dimerization, also exhibits a higher-order multimerization and both low- and high-order multimerizations are essential for its restriction activity. Interacts with BTBD1 and BTBD2. Interacts with PSMC4, PSMC5, PSMD7 and HSPA8/HSC70. Interacts (via B30.2/SPRY domain) with HSPA1A/B. Interacts with PSMC2, MAP3K7/TAK1, TAB2 and TAB3. Interacts with SQSTM1. Interacts with TRIM6 and TRIM34. Interacts with ULK1 (phosphorylated form), GABARAP, GABARAPL1, GABARAPL2, MAP1LC3A, MAP1LC3C and BECN1. In terms of processing, degraded in a proteasome-independent fashion in the absence of viral infection but in a proteasome-dependent fashion following exposure to restriction sensitive virus. Post-translationally, autoubiquitinated in a RING finger- and UBE2D2-dependent manner. Monoubiquitinated by TRIM21. Deubiquitinated by Yersinia YopJ. Ubiquitination may not lead to proteasomal degradation.

The protein localises to the cytoplasm. Its subcellular location is the nucleus. It carries out the reaction S-ubiquitinyl-[E2 ubiquitin-conjugating enzyme]-L-cysteine + [acceptor protein]-L-lysine = [E2 ubiquitin-conjugating enzyme]-L-cysteine + N(6)-ubiquitinyl-[acceptor protein]-L-lysine.. The protein operates within protein modification; protein ubiquitination. Capsid-specific restriction factor that prevents infection from non-host-adapted retroviruses. Blocks viral replication early in the life cycle, after viral entry but before reverse transcription. In addition to acting as a capsid-specific restriction factor, also acts as a pattern recognition receptor that activates innate immune signaling in response to the retroviral capsid lattice. Binding to the viral capsid triggers its E3 ubiquitin ligase activity, and in concert with the heterodimeric ubiquitin conjugating enzyme complex UBE2V1-UBE2N (also known as UBC13-UEV1A complex) generates 'Lys-63'-linked polyubiquitin chains, which in turn are catalysts in the autophosphorylation of the MAP3K7/TAK1 complex (includes TAK1, TAB2, and TAB3). Activation of the MAP3K7/TAK1 complex by autophosphorylation results in the induction and expression of NF-kappa-B and MAPK-responsive inflammatory genes, thereby leading to an innate immune response in the infected cell. Plays a role in regulating autophagy through activation of autophagy regulator BECN1 by causing its dissociation from its inhibitors BCL2 and TAB2. The chain is Tripartite motif-containing protein 5 (TRIM5) from Gorilla gorilla gorilla (Western lowland gorilla).